The chain runs to 183 residues: UPF0316 protein BcerKBAB4_3093 (183 aa).

Helical transmembrane passes span 6–26, 32–52, and 58–78; these read LIFVLQIIYVPTLTIRTILLV, SAAGVGLLEGAIYIVSLGIVF, and WMNIVAYVIGFSAGLLLGGYI.

This sequence belongs to the UPF0316 family.

The protein localises to the cell membrane. The chain is UPF0316 protein BcerKBAB4_3093 from Bacillus mycoides (strain KBAB4) (Bacillus weihenstephanensis).